A 120-amino-acid chain; its full sequence is Large ribosomal subunit protein bL12 (120 aa).

This sequence belongs to the bacterial ribosomal protein bL12 family. Homodimer. Part of the ribosomal stalk of the 50S ribosomal subunit. Forms a multimeric L10(L12)X complex, where L10 forms an elongated spine to which 2 to 4 L12 dimers bind in a sequential fashion. Binds GTP-bound translation factors.

In terms of biological role, forms part of the ribosomal stalk which helps the ribosome interact with GTP-bound translation factors. Is thus essential for accurate translation. This chain is Large ribosomal subunit protein bL12, found in Listeria monocytogenes serotype 4b (strain CLIP80459).